A 255-amino-acid polypeptide reads, in one-letter code: tRNA (guanine-N(7)-)-methyltransferase (255 aa).

The interval 1–29 is disordered; that stretch reads MSDSDASRPSAIASDGPDAAGKHASGAPW. Residues Glu-86, Glu-111, Asp-138, and Asp-160 each coordinate S-adenosyl-L-methionine. Asp-160 is a catalytic residue. Residues Lys-164, Asp-196, and 233 to 236 each bind substrate; that span reads TRYE.

Belongs to the class I-like SAM-binding methyltransferase superfamily. TrmB family.

The catalysed reaction is guanosine(46) in tRNA + S-adenosyl-L-methionine = N(7)-methylguanosine(46) in tRNA + S-adenosyl-L-homocysteine. The protein operates within tRNA modification; N(7)-methylguanine-tRNA biosynthesis. Functionally, catalyzes the formation of N(7)-methylguanine at position 46 (m7G46) in tRNA. The chain is tRNA (guanine-N(7)-)-methyltransferase from Ruegeria sp. (strain TM1040) (Silicibacter sp.).